A 394-amino-acid polypeptide reads, in one-letter code: Actin-related protein 2-B (394 aa).

Residues 160–162, 214–218, and 305–310 each bind ATP; these read GDG, RMMKE, and GGSTMY.

Belongs to the actin family. ARP2 subfamily. Component of the Arp2/3 complex composed of actr2/arp2, actr3/arp3, arpc1b, arpc2, arpc3, arpc4 and arpc5.

The protein localises to the cytoplasm. The protein resides in the cytoskeleton. It is found in the cell projection. Its subcellular location is the nucleus. Its function is as follows. ATP-binding component of the Arp2/3 complex, a multiprotein complex that mediates actin polymerization upon stimulation by nucleation-promoting factor (NPF). The Arp2/3 complex mediates the formation of branched actin networks in the cytoplasm, providing the force for cell motility. Seems to contact the pointed end of the daughter actin filament. In addition to its role in the cytoplasmic cytoskeleton, the Arp2/3 complex also promotes actin polymerization in the nucleus, thereby regulating gene transcription and repair of damaged DNA. The Arp2/3 complex promotes homologous recombination (HR) repair in response to DNA damage by promoting nuclear actin polymerization, leading to drive motility of double-strand breaks (DSBs). In Danio rerio (Zebrafish), this protein is Actin-related protein 2-B (actr2b).